Here is a 142-residue protein sequence, read N- to C-terminus: Coactosin-like protein (142 aa).

Alanine 2 is subject to N-acetylalanine. The ADF-H domain maps to alanine 2–lysine 130. Positions threonine 66–lysine 75 are flexible and important for F-actin binding. 2 positions are modified to N6-acetyllysine: lysine 102 and lysine 126.

Belongs to the actin-binding proteins ADF family. Coactosin subfamily. In terms of assembly, interacts with 5-lipoxygenase (ALOX5/5LO) in a calcium-independent manner. Binds to F-actin with a stoichiometry of 1:2. In terms of tissue distribution, widely expressed with highest levels in placenta, lung, kidney and peripheral blood leukocytes and lower levels in brain, liver and pancreas.

Its subcellular location is the cytoplasm. It is found in the cytoskeleton. The protein resides in the nucleus. Functionally, binds to F-actin in a calcium-independent manner. Has no direct effect on actin depolymerization. Acts as a chaperone for ALOX5 (5LO), influencing both its stability and activity in leukotrienes synthesis. This chain is Coactosin-like protein (COTL1), found in Homo sapiens (Human).